A 292-amino-acid polypeptide reads, in one-letter code: Elongation factor Ts (292 aa).

The tract at residues 81–84 (TDFV) is involved in Mg(2+) ion dislocation from EF-Tu.

This sequence belongs to the EF-Ts family.

The protein resides in the cytoplasm. Associates with the EF-Tu.GDP complex and induces the exchange of GDP to GTP. It remains bound to the aminoacyl-tRNA.EF-Tu.GTP complex up to the GTP hydrolysis stage on the ribosome. The polypeptide is Elongation factor Ts (Alkalilimnicola ehrlichii (strain ATCC BAA-1101 / DSM 17681 / MLHE-1)).